The primary structure comprises 131 residues: Small ribosomal subunit protein uS8 (131 aa).

The protein belongs to the universal ribosomal protein uS8 family. In terms of assembly, part of the 30S ribosomal subunit. Contacts proteins S5 and S12.

In terms of biological role, one of the primary rRNA binding proteins, it binds directly to 16S rRNA central domain where it helps coordinate assembly of the platform of the 30S subunit. The sequence is that of Small ribosomal subunit protein uS8 from Leptothrix cholodnii (strain ATCC 51168 / LMG 8142 / SP-6) (Leptothrix discophora (strain SP-6)).